A 353-amino-acid chain; its full sequence is Paraneoplastic antigen Ma1 homolog (353 aa).

The protein belongs to the PNMA family. As to expression, testis and brain specific.

Its subcellular location is the nucleus. It is found in the nucleolus. In Rattus norvegicus (Rat), this protein is Paraneoplastic antigen Ma1 homolog (Pnma1).